The chain runs to 199 residues: Small ribosomal subunit protein eS6 (199 aa).

Positions 172-183 (KEQREKRSESLA) are enriched in basic and acidic residues. The interval 172-199 (KEQREKRSESLAKKRSRLSAASKPSIAA) is disordered.

Belongs to the eukaryotic ribosomal protein eS6 family. In terms of processing, ribosomal protein S6 is the major substrate of protein kinases in eukaryote ribosomes.

In terms of biological role, component of the 40S small ribosomal subunit. Plays an important role in controlling cell growth and proliferation through the selective translation of particular classes of mRNA. The protein is Small ribosomal subunit protein eS6 (RPS6) of Nicotiana tabacum (Common tobacco).